The primary structure comprises 255 residues: 14-3-3 protein 5 (255 aa).

This sequence belongs to the 14-3-3 family. As to quaternary structure, homodimer.

This Solanum lycopersicum (Tomato) protein is 14-3-3 protein 5 (TFT5).